Reading from the N-terminus, the 552-residue chain is Putative transport protein APJL_0985 (552 aa).

The next 5 membrane-spanning stretches (helical) occupy residues 4-24, 29-49, 65-85, 95-115, and 161-181; these read IAIIVSLLSLVAVLGLWIGHI, VGLGIGGVLFGGIIISHCTHL, FGLILFVYSIGIQVGPGFFAS, GFAVMIVGLSGILVALIHKLF, and IAYPFGIIGILLSMWLIRIIF. RCK C-terminal domains are found at residues 190-275 and 277-360; these read QEFD…ILGE and ADVS…IIGD. 6 helical membrane-spanning segments follow: residues 370 to 390, 403 to 425, 438 to 458, 463 to 483, 492 to 512, and 529 to 549; these read MLPIFLGIGLGVLLGSLPLYL, GGPLVVALILARIGSIGKLYWFM, IVLFLSVVGLKAGANFLDTLL, LAWMGYGAIITFIPLIVTGFV, YLSLCGLLSGAMTDPPALAFA, and VYPLVMFLRIILPQLLAILLW.

Belongs to the AAE transporter (TC 2.A.81) family. YidE subfamily.

Its subcellular location is the cell membrane. The sequence is that of Putative transport protein APJL_0985 from Actinobacillus pleuropneumoniae serotype 3 (strain JL03).